The chain runs to 201 residues: 5'(3')-deoxyribonucleotidase, cytosolic type (201 aa).

Residue Asp-10 is the Nucleophile of the active site. The Mg(2+) site is built by Asp-10 and Asp-12. The active-site Proton donor is the Asp-12. Residues Phe-18, Phe-44, Tyr-65, Thr-99, and Lys-134 each coordinate substrate. Position 145 (Asp-145) interacts with Mg(2+). Ser-182 bears the Phosphoserine mark.

Belongs to the 5'(3')-deoxyribonucleotidase family. In terms of assembly, homodimer. It depends on Mg(2+) as a cofactor. Detected in skeletal muscle, heart and pancreas.

It is found in the cytoplasm. Its function is as follows. Dephosphorylates the 5' and 2'(3')-phosphates of deoxyribonucleotides, with a preference for dUMP and dTMP, intermediate activity towards dGMP, and low activity towards dCMP and dAMP. The polypeptide is 5'(3')-deoxyribonucleotidase, cytosolic type (NT5C) (Homo sapiens (Human)).